Consider the following 63-residue polypeptide: Jingdongin-1 (63 aa).

A signal peptide spans 1–22 (MLTLKKSMLLLFFLGTINLSLC). A propeptide spanning residues 23-44 (EQERDADEEERRDDDEMDVEVE) is cleaved from the precursor. Residues Cys-57 and Cys-63 are joined by a disulfide bond.

As to expression, expressed by the skin glands.

Its subcellular location is the secreted. Its function is as follows. The synthetic peptide has antimicrobial activity against Gram-negative bacterium B.dysenteriae (MIC=35 ug/ml), against Gram-positive bacteria S.aureus ATCC 2592 (MIC=4.7 ug/ml) and B.subtilis ATCC 6633 (MIC=9.38 ug/ml) and against fungus C.albicans (MIC=18.75 ug/ml). Has no activity against Gram-negative bacterium E.coli ATCC 25922 but exhibits low hemolytic activity at concentrations up to 200 ug/ml. The sequence is that of Jingdongin-1 from Amolops jingdongensis (Chinese torrent frog).